The chain runs to 963 residues: Importin-13 (963 aa).

20 HEAT repeats span residues 24 to 54, 56 to 88, 95 to 135, 142 to 179, 194 to 231, 236 to 268, 276 to 325, 330 to 372, 375 to 438, 440 to 476, 487 to 522, 524 to 558, 562 to 600, 603 to 648, 676 to 716, 720 to 754, 761 to 803, 815 to 845, 860 to 893, and 897 to 931; these read ENVE…QAQV, PQAW…KISR, TDQY…LSMM, AVAD…EFQT, LAVE…SWVQ, LQDC…NAIS, VNTL…ALLD, WQSF…DDIL, EAEK…YEML, AELL…FQSI, VVPG…WLAD, PVMI…CREC, LPPY…LLSA, VEEN…SNLF, PVVV…VKTL, FAPM…VHIF, FPPI…ALKR, VKAV…TELL, EDGR…FALN, and FSLL…QQIL. The Importin N-terminal domain maps to 45–111; it reads AQKWLMQAQV…KAHSFTQITR (67 aa).

The protein belongs to the importin beta family. Interacts with UBC9, RAN, RBM8A, eIF-1A and PAX6. As to expression, expressed in fetal brain, heart, intestine and kidney.

It localises to the cytoplasm. The protein localises to the nucleus. Its function is as follows. Functions in nuclear protein import as nuclear transport receptor. Serves as receptor for nuclear localization signals (NLS) in cargo substrates. Is thought to mediate docking of the importin/substrate complex to the nuclear pore complex (NPC) through binding to nucleoporin and the complex is subsequently translocated through the pore by an energy requiring, Ran-dependent mechanism. At the nucleoplasmic side of the NPC, Ran binds to the importin, the importin/substrate complex dissociates and importin is re-exported from the nucleus to the cytoplasm where GTP hydrolysis releases Ran. The directionality of nuclear import is thought to be conferred by an asymmetric distribution of the GTP- and GDP-bound forms of Ran between the cytoplasm and nucleus. Mediates the nuclear import of UBC9, the RBM8A/MAGOH complex, PAX6 and probably other members of the paired homeobox family. Also mediates nuclear export of eIF-1A, and the cytoplasmic release of eIF-1A is triggered by the loading of import substrates onto IPO13. The protein is Importin-13 (Ipo13) of Rattus norvegicus (Rat).